The chain runs to 477 residues: Glycogen synthase (477 aa).

Lys-15 contacts ADP-alpha-D-glucose.

Belongs to the glycosyltransferase 1 family. Bacterial/plant glycogen synthase subfamily.

The catalysed reaction is [(1-&gt;4)-alpha-D-glucosyl](n) + ADP-alpha-D-glucose = [(1-&gt;4)-alpha-D-glucosyl](n+1) + ADP + H(+). Its pathway is glycan biosynthesis; glycogen biosynthesis. Functionally, synthesizes alpha-1,4-glucan chains using ADP-glucose. The chain is Glycogen synthase from Edwardsiella ictaluri (strain 93-146).